Here is a 627-residue protein sequence, read N- to C-terminus: Myelin-associated glycoprotein (627 aa).

An N-terminal signal peptide occupies residues 1–19 (MIFLATLPLFWIMISASRG). The interval 20 to 325 (GHWGAWMPST…RTVELSVMYA (306 aa)) is interaction with RTN4R and RTN4RL2. Residues 20–516 (GHWGAWMPST…HRLMWAKIGP (497 aa)) are Extracellular-facing. Residue W22 is glycosylated (C-linked (Man) tryptophan). Positions 22-120 (WGAWMPSTIS…LGGKYYFRGD (99 aa)) constitute an Ig-like V-type domain. Intrachain disulfides connect C37–C165, C42–C100, and C159–C217. 65–67 (YPK) lines the a ganglioside GT1b (d18:1(4E)) pocket. N99 carries an N-linked (GlcNAc...) asparagine glycan. Residues R118 and 124–128 (YNQYT) each bind a ganglioside GT1b (d18:1(4E)). Ig-like C2-type domains lie at 139–237 (NTPN…LDVK), 241–325 (VIVE…VMYA), 327–412 (WKPT…VEFA), and 413–508 (PIIL…GAHR). 2 N-linked (GlcNAc...) asparagine glycosylation sites follow: N223 and N246. Cysteines 261 and 305 form a disulfide. N315 and N332 each carry an N-linked (GlcNAc...) asparagine glycan. C347 and C392 are joined by a disulfide. N-linked (GlcNAc...) asparagine glycosylation occurs at N406. 2 disulfides stabilise this stretch: C421–C430 and C432–C488. N-linked (GlcNAc...) asparagine glycosylation is found at N450 and N454. Residues 517 to 536 (VGAVVAFAILIAIVCYITQT) traverse the membrane as a helical segment. A lipid anchor (S-palmitoyl cysteine) is attached at C531. Residues 537-627 (RRKKNVTESS…LAEYAEIRVK (91 aa)) are Cytoplasmic-facing. Residues S545, S547, S549, and S591 each carry the phosphoserine modification. Residues 578–627 (LGSERRLLGLRGESPELDLSYSHSDLGKRPTKDSYTLTEELAEYAEIRVK) are required for normal axon myelination in the central nervous system.

Belongs to the immunoglobulin superfamily. SIGLEC (sialic acid binding Ig-like lectin) family. In terms of assembly, monomer and homodimer. Interacts (via the first three N-terminal Ig-like domains) with RTN4R and RTN4RL2. Interacts with isoform 2 of BSG. Post-translationally, N-glycosylated. Phosphorylated on tyrosine residues. In terms of processing, ubiquitinated, leading to proteasomal degradation. In terms of tissue distribution, detected in the myelin tract in brain, especially in the corpus callosum and in peripheral nerve. Expressed by myelinating glial cells in the central and peripheral nervous system. Detected in oligodendrocyte processes before formation of compact myelin. Restricted to the periaxonal space after myelination. Isoform S-MAG is the predominant isoform in CNS and PNS of the adult (at protein level).

It is found in the cell membrane. It localises to the membrane raft. Adhesion molecule that mediates interactions between myelinating cells and neurons by binding to neuronal sialic acid-containing gangliosides and to the glycoproteins RTN4R and RTN4RL2. Not required for initial myelination, but seems to play a role in the maintenance of normal axon myelination. Protects motoneurons against apoptosis, also after injury; protection against apoptosis is probably mediated via interaction with neuronal RTN4R and RTN4RL2. Required to prevent degeneration of myelinated axons in adults; this probably depends on binding to gangliosides on the axon cell membrane. Negative regulator of neurite outgrowth that inhibits axon longitudinal growth. Negative regulator of neurite outgrowth; in dorsal root ganglion neurons the inhibition is mediated primarily via binding to neuronal RTN4R or RTN4RL2 and to a lesser degree via binding to neuronal gangliosides. In cerebellar granule cells the inhibition is mediated via binding to neuronal gangliosides. In sensory neurons, inhibition of neurite extension depends only partially on RTN4R, RTN4RL2 and gangliosides. Inhibits axon outgrowth by binding to RTN4R. Preferentially binds to alpha-2,3-linked sialic acid. Binds ganglioside Gt1b. The sequence is that of Myelin-associated glycoprotein (Mag) from Mus musculus (Mouse).